Reading from the N-terminus, the 540-residue chain is Methionine--tRNA ligase 1 (540 aa).

The 'HIGH' region motif lies at 10 to 20 (PYANGSLHLGH). Positions 141, 144, 153, and 156 each coordinate Zn(2+). Residues 327-331 (KISTS) carry the 'KMSKS' region motif. T330 contributes to the ATP binding site.

This sequence belongs to the class-I aminoacyl-tRNA synthetase family. MetG type 1 subfamily. As to quaternary structure, monomer. It depends on Zn(2+) as a cofactor.

The protein localises to the cytoplasm. The catalysed reaction is tRNA(Met) + L-methionine + ATP = L-methionyl-tRNA(Met) + AMP + diphosphate. Its function is as follows. Is required not only for elongation of protein synthesis but also for the initiation of all mRNA translation through initiator tRNA(fMet) aminoacylation. In Alkaliphilus oremlandii (strain OhILAs) (Clostridium oremlandii (strain OhILAs)), this protein is Methionine--tRNA ligase 1.